The chain runs to 363 residues: Flagellar P-ring protein (363 aa).

An N-terminal signal peptide occupies residues 1–21; sequence MKTVINIFILFTFLASLSANA.

This sequence belongs to the FlgI family. In terms of assembly, the basal body constitutes a major portion of the flagellar organelle and consists of four rings (L,P,S, and M) mounted on a central rod.

The protein resides in the periplasm. The protein localises to the bacterial flagellum basal body. Its function is as follows. Assembles around the rod to form the L-ring and probably protects the motor/basal body from shearing forces during rotation. This Colwellia psychrerythraea (strain 34H / ATCC BAA-681) (Vibrio psychroerythus) protein is Flagellar P-ring protein.